The primary structure comprises 814 residues: Immunoglobulin superfamily DCC subclass member 3 (814 aa).

An N-terminal signal peptide occupies residues M1–G35. Ig-like C2-type domains lie at L36–S139, D140–S220, P238–Q321, and P329–T416. 2 disulfides stabilise this stretch: C63–C117 and C160–C209. N93 is a glycosylation site (N-linked (GlcNAc...) asparagine). The N-linked (GlcNAc...) asparagine glycan is linked to N246. Disulfide bonds link C259/C307 and C351/C400. 2 N-linked (GlcNAc...) asparagine glycosylation sites follow: N381 and N382. 2 consecutive Fibronectin type-III domains span residues P426–E520 and A523–R618. N-linked (GlcNAc...) asparagine glycosylation is found at N580, N604, and N634. A helical transmembrane segment spans residues I641 to F661. Disordered stretches follow at residues P722 to P743 and G762 to Q814. A compositionally biased stretch (low complexity) spans T770–A781.

The protein belongs to the immunoglobulin superfamily. DCC family.

It is found in the membrane. This Homo sapiens (Human) protein is Immunoglobulin superfamily DCC subclass member 3 (IGDCC3).